The primary structure comprises 332 residues: Cinnamoyl-CoA reductase 2 (332 aa).

Residues 12–18 (GAGGYIA), arginine 37, lysine 43, 63–64 (DL), 83–85 (TAS), tyrosine 156, lysine 160, 183–186 (PVLV), and serine 198 each bind NADP(+). Residues cysteine 149 and cysteine 157 are joined by a disulfide bond. The active-site Proton donor is lysine 160.

This sequence belongs to the NAD(P)-dependent epimerase/dehydratase family. Dihydroflavonol-4-reductase subfamily. Expressed at low levels in leaves, stems and flowers.

It carries out the reaction (E)-cinnamaldehyde + NADP(+) + CoA = (E)-cinnamoyl-CoA + NADPH + H(+). The protein operates within aromatic compound metabolism; phenylpropanoid biosynthesis. Its function is as follows. Cinnamoyl-CoA reductase probably involved in the formation of phenolic compounds associated with the hypersensitive response. Seems not to be involved in lignin biosynthesis. In Arabidopsis thaliana (Mouse-ear cress), this protein is Cinnamoyl-CoA reductase 2 (CCR2).